Here is a 279-residue protein sequence, read N- to C-terminus: DegV domain-containing protein spr1019 (279 aa).

One can recognise a DegV domain in the interval 4–277 (IKIVTDSSVT…ENAWAILIRY (274 aa)). Hexadecanoate-binding residues include threonine 62 and serine 94.

Functionally, may bind long-chain fatty acids, such as palmitate, and may play a role in lipid transport or fatty acid metabolism. This is DegV domain-containing protein spr1019 from Streptococcus pneumoniae (strain ATCC BAA-255 / R6).